Reading from the N-terminus, the 1379-residue chain is ATPase histone chaperone YTA7 (1379 aa).

2 disordered regions span residues 1-39 (MARN…TTTR) and 54-243 (DFLE…NSRN). Ala2 is modified (N-acetylalanine). Phosphoserine is present on residues Ser11 and Ser17. The span at 61–78 (VMDKDETPVDVTSDEHHN) shows a compositional bias: basic and acidic residues. Ser94 carries the phosphoserine modification. Residues 97 to 110 (ENARTNEELTNERN) are compositionally biased toward basic and acidic residues. Composition is skewed to acidic residues over residues 119 to 152 (PEED…DEDS) and 170 to 184 (DPDD…DEEG). A compositionally biased stretch (basic residues) spans 192–207 (SSKRLKRANSRRTRSS). A Phosphothreonine modification is found at Thr212. Residues 218–228 (RALRSRTRHSR) show a composition bias toward basic residues. Position 229 is a phosphothreonine (Thr229). Ser241, Ser259, and Ser285 each carry phosphoserine. Residues 302–330 (NPSPARRGRGGWNASQNSGPTRRLFPTGG) are disordered. Ser367, Ser369, and Ser370 each carry phosphoserine. The interval 375 to 396 (LPLGVTPKTKKENTQKKKKKKP) is disordered. An AAA-ATPase; required for its chromatin boundary function region spans residues 450 to 578 (VLFHGPPGTG…PALRRPGRFD (129 aa)). 454-461 (GPPGTGKT) contributes to the ATP binding site. Position 735 is a phosphoserine (Ser735). One can recognise a Bromo domain in the interval 974 to 1101 (RLKNVLKIKL…ANAQMGIEEI (128 aa)). Ser1142 carries the post-translational modification Phosphoserine. Disordered regions lie at residues 1233-1274 (TCTS…ANTN) and 1291-1316 (LHET…GKKS). Basic and acidic residues predominate over residues 1244-1254 (ERARKEPKENE). Ser1256 carries the phosphoserine modification. Over residues 1256–1274 (SLQTQVTEENFSKIDANTN) the composition is skewed to polar residues. Over residues 1293-1316 (ETVEKRERSPIPKEVVEPEQGKKS) the composition is skewed to basic and acidic residues.

It belongs to the AAA ATPase family. Interacts with CSE4/CENP-A. Interacts with SCM3. Interacts with SPT16. Interacts with POB3. Interacts with the casein kinase II complex subunits CKA1, CKA2, CKB1 and CKB2. Interacts with RNA polymerase II. Interacts (via Bromo domain) with histone H3. Interacts (via Bromo domain) with histone H4. Phosphorylated by CDK1 and casein kinase II during S-phase, which leads to its eviction from histone gene promoters and promotes histone gene transcription.

The protein localises to the chromosome. Its subcellular location is the centromere. It is found in the nucleus. Its function is as follows. Functions as an ATP-dependent nucleosome disassembly factor that helps evict canonical histone H3 from the 5'-end of genes upon their induction. Also contributes to kinetochore assembly by cooperating with SCM3 to load the histone H3 variant CSE4/CENP-A at centromeres. Provides a chromatin boundary function at the 5'-end of genes that restricts access by RTT106 and thus prevents ectopic spreading of repressive chromatin into coding regions. Also prevents heterochromatin spreading downstream of the silent mating-type locus HMR, this function is independent of the tRNA boundary element. Contributes to appropriate cell cycle regulation of histone gene expression by recruiting RNA polymerase II to histone genes, and subsequent CDK1- and casein kinase II-dependent eviction from chromatin is required to promote transcriptional elongation. The sequence is that of ATPase histone chaperone YTA7 from Saccharomyces cerevisiae (strain ATCC 204508 / S288c) (Baker's yeast).